The primary structure comprises 196 residues: T-cell surface glycoprotein CD3 epsilon chain (196 aa).

An N-terminal signal peptide occupies residues 1-21 (MPSGNLWKVLGLCLLSVGAWG). Residues 22–116 (QEDIERPDED…VCENCVEVDL (95 aa)) are Extracellular-facing. The region spanning 28-102 (PDEDTQKTFK…VGEKTSHRLY (75 aa)) is the Ig-like domain. Cysteines 49 and 91 form a disulfide. Residues 117–137 (MAVVTIIVVDICITLGLLMVV) traverse the membrane as a helical segment. Residues 138–196 (YYYSKSRKAKAMPVTRGAGAGGRPRGQNRERPPPVPNPDYEPIRKGQRDLYSGLNQRGR) lie on the Cytoplasmic side of the membrane. The disordered stretch occupies residues 150–196 (PVTRGAGAGGRPRGQNRERPPPVPNPDYEPIRKGQRDLYSGLNQRGR). The segment at 164–181 (QNRERPPPVPNPDYEPIR) is NUMB-binding region. The ITAM domain occupies 167-194 (ERPPPVPNPDYEPIRKGQRDLYSGLNQR). Residues 168 to 175 (RPPPVPNP) are proline-rich sequence. Phosphotyrosine occurs at positions 177 and 188.

In terms of assembly, the TCR-CD3 complex is composed of a CD3D/CD3E and a CD3G/CD3E heterodimers that preferentially associate with TCRalpha and TCRbeta, respectively, to form TCRalpha/CD3E/CD3G and TCRbeta/CD3G/CD3E trimers. In turn, the hexamer interacts with CD3Z homodimer to form the TCR-CD3 complex. Alternatively, TCRalpha and TCRbeta can be replaced by TCRgamma and TCRdelta. Interacts with CD6. Interacts (via Proline-rich sequence) with NCK1; the interaction is ligand dependent but independent of tyrosine kinase activation. In terms of processing, phosphorylated on Tyr residues after T-cell receptor triggering by LCK in association with CD4/CD8.

Its subcellular location is the cell membrane. Its function is as follows. Part of the TCR-CD3 complex present on T-lymphocyte cell surface that plays an essential role in adaptive immune response. When antigen presenting cells (APCs) activate T-cell receptor (TCR), TCR-mediated signals are transmitted across the cell membrane by the CD3 chains CD3D, CD3E, CD3G and CD3Z. All CD3 chains contain immunoreceptor tyrosine-based activation motifs (ITAMs) in their cytoplasmic domain. Upon TCR engagement, these motifs become phosphorylated by Src family protein tyrosine kinases LCK and FYN, resulting in the activation of downstream signaling pathways. In addition of this role of signal transduction in T-cell activation, CD3E plays an essential role in correct T-cell development. Also participates in internalization and cell surface down-regulation of TCR-CD3 complexes via endocytosis sequences present in CD3E cytosolic region. In addition to its role as a TCR coreceptor, it serves as a receptor for ITPRIPL1. Ligand recognition inhibits T-cell activation by promoting interaction with NCK1, which prevents CD3E-ZAP70 interaction and blocks the ERK-NFkB signaling cascade and calcium influx. The sequence is that of T-cell surface glycoprotein CD3 epsilon chain (CD3E) from Sus scrofa (Pig).